Consider the following 481-residue polypeptide: Protein hedgehog (481 aa).

The first 19 residues, 1 to 19 (MDNQAVSALWSCASATCLS), serve as a signal peptide directing secretion. The propeptide occupies 20-90 (LDAKRHSIEP…LALNFRHAHS (71 aa)). Positions 26–56 (SIEPNPDGQASPDVNNNNNNHNKSTTTVDAH) are disordered. The N-palmitoyl cysteine moiety is linked to residue Cys91. Ca(2+) contacts are provided by Glu155, Glu156, Asp161, Thr191, Glu192, Asp195, and Asp197. The Cholesterol glycine ester moiety is linked to residue Gly264.

It belongs to the hedgehog family. In terms of assembly, interacts with shf. Post-translationally, the C-terminal part of the hedgehog protein precursor displays an autoproteolysis activity that results in the cleavage of the full-length protein into two parts (N-product and C-product). In addition, the C-terminal part displays a cholesterol transferase activity that results by the covalent attachment of a cholesterol moiety to the C-terminal of the newly generated N-product. The N-product is the active species in both local and long-range signaling, whereas the C-product has no signaling activity. In terms of processing, cholesterylation is required for N-product targeting to lipid rafts and multimerization. N-palmitoylation by Rasp of the hedgehog N-product, within the secretory pathway, is required for the embryonic and larval patterning activities of the hedgehog signal.

It localises to the nucleus. It is found in the cytoplasm. The protein resides in the cell membrane. The enzyme catalyses glycyl-L-cysteinyl-[protein] + cholesterol + H(+) = [protein]-C-terminal glycyl cholesterol ester + N-terminal L-cysteinyl-[protein]. Functionally, the C-terminal part of the hedgehog protein precursor displays an autoproteolysis activity that results in the cleavage of the full-length protein into two parts (N-product and C-product). In addition, the C-terminal part displays a cholesterol transferase activity that results by the covalent attachment of a cholesterol moiety to the C-terminal of the newly generated N-product. Once cleaved, the C-product has no signaling activity and diffuses from the cell. The dually lipidated hedgehog protein N-product is a morphogen which is essential for a variety of patterning events during development. Establishes the anterior-posterior axis of the embryonic segments and patterns the larval imaginal disks. Binds to the patched (ptc) receptor, which functions in association with smoothened (smo), to activate the transcription of target genes wingless (wg), decapentaplegic (dpp) and ptc. In the absence of hh, ptc represses the constitutive signaling activity of smo through fused (fu). Essential component of a signaling pathway which regulates the Duox-dependent gut immune response to bacterial uracil; required to activate Cad99C-dependent endosome formation, norpA-dependent Ca2+ mobilization and p38 MAPK, which are essential steps in the Duox-dependent production of reactive oxygen species (ROS) in response to intestinal bacterial infection. During photoreceptor differentiation, it up-regulates transcription of Ubr3, which in turn promotes the hh-signaling pathway by mediating the ubiquitination and degradation of cos. This Drosophila hydei (Fruit fly) protein is Protein hedgehog.